The primary structure comprises 171 residues: Small ribosomal subunit protein uS5 (171 aa).

The 64-residue stretch at 15-78 (LKDRLVAINR…EAAKKNLTRV (64 aa)) folds into the S5 DRBM domain.

It belongs to the universal ribosomal protein uS5 family. Part of the 30S ribosomal subunit. Contacts proteins S4 and S8.

In terms of biological role, with S4 and S12 plays an important role in translational accuracy. Functionally, located at the back of the 30S subunit body where it stabilizes the conformation of the head with respect to the body. This chain is Small ribosomal subunit protein uS5, found in Phocaeicola vulgatus (strain ATCC 8482 / DSM 1447 / JCM 5826 / CCUG 4940 / NBRC 14291 / NCTC 11154) (Bacteroides vulgatus).